Here is a 398-residue protein sequence, read N- to C-terminus: Transposase for insertion sequence element ISRM5 (398 aa).

The protein belongs to the transposase mutator family.

Required for the transposition of the insertion element. The polypeptide is Transposase for insertion sequence element ISRM5 (Rhizobium meliloti (strain 1021) (Ensifer meliloti)).